Here is a 525-residue protein sequence, read N- to C-terminus: GMP synthase [glutamine-hydrolyzing] (525 aa).

The 199-residue stretch at 9 to 207 folds into the Glutamine amidotransferase type-1 domain; sequence RILILDFGSQ…VLEICGCAAL (199 aa). Residue Cys86 is the Nucleophile of the active site. Catalysis depends on residues His181 and Glu183. Residues 208–400 enclose the GMPS ATP-PPase domain; the sequence is WTPATIIEDA…LGLPYDMLYR (193 aa). 235–241 contacts ATP; it reads SGGVDSS.

In terms of assembly, homodimer.

It carries out the reaction XMP + L-glutamine + ATP + H2O = GMP + L-glutamate + AMP + diphosphate + 2 H(+). Its pathway is purine metabolism; GMP biosynthesis; GMP from XMP (L-Gln route): step 1/1. Catalyzes the synthesis of GMP from XMP. In Edwardsiella ictaluri (strain 93-146), this protein is GMP synthase [glutamine-hydrolyzing].